A 195-amino-acid polypeptide reads, in one-letter code: Imidazoleglycerol-phosphate dehydratase (195 aa).

It belongs to the imidazoleglycerol-phosphate dehydratase family.

It is found in the cytoplasm. It carries out the reaction D-erythro-1-(imidazol-4-yl)glycerol 3-phosphate = 3-(imidazol-4-yl)-2-oxopropyl phosphate + H2O. The protein operates within amino-acid biosynthesis; L-histidine biosynthesis; L-histidine from 5-phospho-alpha-D-ribose 1-diphosphate: step 6/9. The polypeptide is Imidazoleglycerol-phosphate dehydratase (Geobacter sp. (strain M21)).